The following is a 258-amino-acid chain: 5-oxoprolinase subunit A (258 aa).

This sequence belongs to the LamB/PxpA family. In terms of assembly, forms a complex composed of PxpA, PxpB and PxpC.

The enzyme catalyses 5-oxo-L-proline + ATP + 2 H2O = L-glutamate + ADP + phosphate + H(+). Functionally, catalyzes the cleavage of 5-oxoproline to form L-glutamate coupled to the hydrolysis of ATP to ADP and inorganic phosphate. This chain is 5-oxoprolinase subunit A, found in Corynebacterium jeikeium (strain K411).